Reading from the N-terminus, the 444-residue chain is Acyl-CoA 6-desaturase (444 aa).

Over 1-122 the chain is Cytoplasmic; sequence MGKGGNQDEG…FRALRKTAED (122 aa). Residues 18-95 form the Cytochrome b5 heme-binding domain; it reads MPTFRWEEIQ…MKPLLIGELA (78 aa). A helical membrane pass occupies residues 123–143; it reads MNLFKSNQLFFLLHLAHIIAM. The Lumenal segment spans residues 144 to 147; sequence ESIA. The chain crosses the membrane as a helical span at residues 148–168; that stretch reads WFTLFYFGNGWIPTIITAFVL. Topologically, residues 169–264 are cytoplasmic; that stretch reads ATSQAQAGWL…KYLPYNHQHE (96 aa). A Histidine box-1 motif is present at residues 180-184; sequence HDYGH. A Histidine box-2 motif is present at residues 217 to 221; that stretch reads HFQHH. A helical transmembrane segment spans residues 265 to 285; it reads YFFLIGPPLLIPLYFQYQIIM. Topologically, residues 286 to 305 are lumenal; that stretch reads TMIVRKYWADLAWAISYYTR. The chain crosses the membrane as a helical span at residues 306–326; sequence FFITYIPFYGVLGSILFLNFI. The Cytoplasmic segment spans residues 327-444; it reads RFLESHWFVW…QLWLDAYLHK (118 aa). The Histidine box-3 motif lies at 382–386; sequence QIEHH.

It belongs to the fatty acid desaturase type 1 family.

The protein localises to the endoplasmic reticulum membrane. The enzyme catalyses (9Z,12Z)-octadecadienoyl-CoA + 2 Fe(II)-[cytochrome b5] + O2 + 2 H(+) = (6Z,9Z,12Z)-octadecatrienoyl-CoA + 2 Fe(III)-[cytochrome b5] + 2 H2O. The catalysed reaction is (9Z,12Z,15Z)-octadecatrienoyl-CoA + 2 Fe(II)-[cytochrome b5] + O2 + 2 H(+) = (6Z,9Z,12Z,15Z)-octadecatetraenoyl-CoA + 2 Fe(III)-[cytochrome b5] + 2 H2O. It catalyses the reaction (9Z,12Z,15Z,18Z,21Z)-tetracosapentaenoyl-CoA + 2 Fe(II)-[cytochrome b5] + O2 + 2 H(+) = (6Z,9Z,12Z,15Z,18Z,21Z)-tetracosahexaenoyl-CoA + 2 Fe(III)-[cytochrome b5] + 2 H2O. It carries out the reaction (11E)-octadecenoyl-CoA + 2 Fe(II)-[cytochrome b5] + O2 + 2 H(+) = (6Z,11E)-octadecadienoyl-CoA + 2 Fe(III)-[cytochrome b5] + 2 H2O. The enzyme catalyses (11Z,14Z)-eicosadienoyl-CoA + 2 Fe(II)-[cytochrome b5] + O2 + 2 H(+) = (8Z,11Z,14Z)-eicosatrienoyl-CoA + 2 Fe(III)-[cytochrome b5] + 2 H2O. The catalysed reaction is (11Z,14Z,17Z)-eicosatrienoyl-CoA + 2 Fe(II)-[cytochrome b5] + O2 + 2 H(+) = (8Z,11Z,14Z,17Z)-eicosatetraenoyl-CoA + 2 Fe(III)-[cytochrome b5] + 2 H2O. It functions in the pathway lipid metabolism; polyunsaturated fatty acid biosynthesis. In terms of biological role, involved in the biosynthesis of highly unsaturated fatty acids (HUFA) from the essential polyunsaturated fatty acids (PUFA) linoleic acid (LA) (18:2n-6) and alpha-linolenic acid (ALA) (18:3n-3) precursors, acting as a fatty acyl-coenzyme A (CoA) desaturase that introduces a cis double bond at carbon 6 of the fatty acyl chain. Catalyzes the first and rate limiting step in this pathway which is the desaturation of LA (18:2n-6) and ALA (18:3n-3) into gamma-linoleate (GLA) (18:3n-6) and stearidonate (18:4n-3), respectively. Subsequently, in the biosynthetic pathway of HUFA n-3 series, it desaturates tetracosapentaenoate (24:5n-3) to tetracosahexaenoate (24:6n-3), which is then converted to docosahexaenoate (DHA)(22:6n-3), an important lipid for nervous system function. It can also desaturate (11E)-octadecenoate (trans-vaccenoate, a metabolite in the biohydrogenation pathway of LA and the predominant trans fatty acid in cow milk) at carbon 6 generating (6Z,11E)-octadecadienoate. In addition to Delta-6 activity, this enzyme exhibits Delta-8 activity with slight biases toward n-3 fatty acyl-CoA substrates. This Bos taurus (Bovine) protein is Acyl-CoA 6-desaturase (FADS2).